Consider the following 707-residue polypeptide: Polyribonucleotide nucleotidyltransferase (707 aa).

The Mg(2+) site is built by Asp485 and Asp491. Residues 552–611 (PRIHTMKINSDKIKDVIGKGGAVIRALTEETGTTIEIEDDGTIKIAATEGAAAKEAIRRI) enclose the KH domain. In terms of domain architecture, S1 motif spans 621–689 (GRIYTGKVMR…RQGRIRLSMK (69 aa)).

It belongs to the polyribonucleotide nucleotidyltransferase family. As to quaternary structure, component of the RNA degradosome, which is a multiprotein complex involved in RNA processing and mRNA degradation. Mg(2+) is required as a cofactor.

Its subcellular location is the cytoplasm. It catalyses the reaction RNA(n+1) + phosphate = RNA(n) + a ribonucleoside 5'-diphosphate. In terms of biological role, involved in mRNA degradation. Catalyzes the phosphorolysis of single-stranded polyribonucleotides processively in the 3'- to 5'-direction. The sequence is that of Polyribonucleotide nucleotidyltransferase from Photobacterium profundum (strain SS9).